Consider the following 460-residue polypeptide: Elongation factor 1-alpha (460 aa).

Residue glycine 2 is modified to N,N,N-trimethylglycine. An N6,N6-dimethyllysine; alternate modification is found at lysine 3. Lysine 3 is modified (N6-methyllysine; alternate). The tr-type G domain occupies 6–241; it reads KTHINVVVIG…DSIEPPKRPT (236 aa). Positions 15-22 are G1; that stretch reads GHVDSGKS. GTP is bound at residue 15 to 22; that stretch reads GHVDSGKS. Residue lysine 31 is modified to N6-methyllysine. Residues 71–75 are G2; the sequence is GITID. Lysine 80 carries the post-translational modification N6,N6,N6-trimethyllysine. The G3 stretch occupies residues 92–95; the sequence is DAPG. GTP is bound by residues 92–96 and 154–157; these read DAPGH and NKMD. The tract at residues 154 to 157 is G4; sequence NKMD. Residues 193 to 195 form a G5 region; that stretch reads SGF. The residue at position 317 (lysine 317) is an N6,N6-dimethyllysine; alternate. Lysine 317 is subject to N6-methyllysine; alternate. The residue at position 391 (lysine 391) is an N6-methyllysine.

It belongs to the TRAFAC class translation factor GTPase superfamily. Classic translation factor GTPase family. EF-Tu/EF-1A subfamily.

The protein resides in the cytoplasm. In terms of biological role, this protein promotes the GTP-dependent binding of aminoacyl-tRNA to the A-site of ribosomes during protein biosynthesis. In Podospora anserina (Pleurage anserina), this protein is Elongation factor 1-alpha (TEF).